The chain runs to 91 residues: Small ribosomal subunit protein bS18 (91 aa).

It belongs to the bacterial ribosomal protein bS18 family. In terms of assembly, part of the 30S ribosomal subunit. Forms a tight heterodimer with protein bS6.

Functionally, binds as a heterodimer with protein bS6 to the central domain of the 16S rRNA, where it helps stabilize the platform of the 30S subunit. The polypeptide is Small ribosomal subunit protein bS18 (Paraburkholderia xenovorans (strain LB400)).